The primary structure comprises 153 residues: MARNTLSSRFRRVDIDEFDENKFVDEHEEAAAAAGEPGPDPCEVDGLLRQGDMLRAFHAALRNSPINTKNQAVKERAQGVVLKVLTNFKSSEIEQAVQSLDRNGIDLLMKYIYKGFEKPTENSSAVLLQWHEKALAVGGLGSIIRVLTARKTV.

S64 carries the phosphoserine modification.

This sequence belongs to the ARPC5 family. May be a component of the Arp2/3 complex in which it may replace ARPC5.

The protein resides in the cytoplasm. Its subcellular location is the cytoskeleton. In terms of biological role, may function as component of the Arp2/3 complex which is involved in regulation of actin polymerization and together with an activating nucleation-promoting factor (NPF) mediates the formation of branched actin networks. The polypeptide is Actin-related protein 2/3 complex subunit 5-like protein (Arpc5l) (Mus musculus (Mouse)).